The following is a 592-amino-acid chain: Aspartate--tRNA(Asp/Asn) ligase (592 aa).

Glu177 serves as a coordination point for L-aspartate. Residues 201–204 (QLFK) form an aspartate region. Residue Arg223 participates in L-aspartate binding. ATP is bound by residues 223-225 (RDE) and Gln232. His451 contacts L-aspartate. Glu485 is a binding site for ATP. Arg492 is an L-aspartate binding site. 537 to 540 (GLDR) serves as a coordination point for ATP.

It belongs to the class-II aminoacyl-tRNA synthetase family. Type 1 subfamily. Homodimer.

It localises to the cytoplasm. The enzyme catalyses tRNA(Asx) + L-aspartate + ATP = L-aspartyl-tRNA(Asx) + AMP + diphosphate. Its function is as follows. Aspartyl-tRNA synthetase with relaxed tRNA specificity since it is able to aspartylate not only its cognate tRNA(Asp) but also tRNA(Asn). Reaction proceeds in two steps: L-aspartate is first activated by ATP to form Asp-AMP and then transferred to the acceptor end of tRNA(Asp/Asn). The polypeptide is Aspartate--tRNA(Asp/Asn) ligase (Bacillus subtilis (strain 168)).